The following is a 340-amino-acid chain: Dihydroorotate dehydrogenase (quinone) (340 aa).

FMN is bound by residues 67–71 (AGFDK) and T91. K71 lines the substrate pocket. 116-120 (NRMGF) serves as a coordination point for substrate. N143 and N176 together coordinate FMN. N176 is a substrate binding site. The active-site Nucleophile is S179. A substrate-binding site is contributed by N181. FMN contacts are provided by K217 and T245. Residue 246–247 (NT) participates in substrate binding. Residues G267, G296, and 317 to 318 (YT) each bind FMN.

Belongs to the dihydroorotate dehydrogenase family. Type 2 subfamily. As to quaternary structure, monomer. FMN is required as a cofactor.

Its subcellular location is the cell membrane. The enzyme catalyses (S)-dihydroorotate + a quinone = orotate + a quinol. Its pathway is pyrimidine metabolism; UMP biosynthesis via de novo pathway; orotate from (S)-dihydroorotate (quinone route): step 1/1. Functionally, catalyzes the conversion of dihydroorotate to orotate with quinone as electron acceptor. The chain is Dihydroorotate dehydrogenase (quinone) from Christiangramia forsetii (strain DSM 17595 / CGMCC 1.15422 / KT0803) (Gramella forsetii).